The sequence spans 341 residues: Eukaryotic translation initiation factor 3 subunit I (341 aa).

6 WD repeats span residues G8–T47, G56–T95, L151–A190, E194–V233, T235–E274, and G291–P331.

This sequence belongs to the eIF-3 subunit I family. As to quaternary structure, component of the eukaryotic translation initiation factor 3 (eIF-3) complex.

The protein resides in the cytoplasm. In terms of biological role, component of the eukaryotic translation initiation factor 3 (eIF-3) complex, which is involved in protein synthesis of a specialized repertoire of mRNAs and, together with other initiation factors, stimulates binding of mRNA and methionyl-tRNAi to the 40S ribosome. The eIF-3 complex specifically targets and initiates translation of a subset of mRNAs involved in cell proliferation. This is Eukaryotic translation initiation factor 3 subunit I from Cryptococcus neoformans var. neoformans serotype D (strain B-3501A) (Filobasidiella neoformans).